Consider the following 275-residue polypeptide: Hydroxyethylthiazole kinase (275 aa).

Met-53 contributes to the substrate binding site. 2 residues coordinate ATP: Arg-128 and Ser-174. Substrate is bound at residue Gly-201.

It belongs to the Thz kinase family. Requires Mg(2+) as cofactor.

The enzyme catalyses 5-(2-hydroxyethyl)-4-methylthiazole + ATP = 4-methyl-5-(2-phosphooxyethyl)-thiazole + ADP + H(+). Its pathway is cofactor biosynthesis; thiamine diphosphate biosynthesis; 4-methyl-5-(2-phosphoethyl)-thiazole from 5-(2-hydroxyethyl)-4-methylthiazole: step 1/1. Its function is as follows. Catalyzes the phosphorylation of the hydroxyl group of 4-methyl-5-beta-hydroxyethylthiazole (THZ). The chain is Hydroxyethylthiazole kinase from Kineococcus radiotolerans (strain ATCC BAA-149 / DSM 14245 / SRS30216).